The chain runs to 454 residues: Pup--protein ligase (454 aa).

E9 is a binding site for Mg(2+). Position 53 (R53) interacts with ATP. Y55 is a Mg(2+) binding site. D57 functions as the Proton acceptor in the catalytic mechanism. Residue E63 coordinates Mg(2+). ATP contacts are provided by T66 and W421.

The protein belongs to the Pup ligase/Pup deamidase family. Pup-conjugating enzyme subfamily.

The enzyme catalyses ATP + [prokaryotic ubiquitin-like protein]-L-glutamate + [protein]-L-lysine = ADP + phosphate + N(6)-([prokaryotic ubiquitin-like protein]-gamma-L-glutamyl)-[protein]-L-lysine.. Its pathway is protein degradation; proteasomal Pup-dependent pathway. It participates in protein modification; protein pupylation. In terms of biological role, catalyzes the covalent attachment of the prokaryotic ubiquitin-like protein modifier Pup to the proteasomal substrate proteins, thereby targeting them for proteasomal degradation. This tagging system is termed pupylation. The ligation reaction involves the side-chain carboxylate of the C-terminal glutamate of Pup and the side-chain amino group of a substrate lysine. This is Pup--protein ligase from Frankia casuarinae (strain DSM 45818 / CECT 9043 / HFP020203 / CcI3).